Reading from the N-terminus, the 198-residue chain is ATP-dependent Clp protease proteolytic subunit 1 (198 aa).

Ser98 functions as the Nucleophile in the catalytic mechanism. The active site involves His123.

It belongs to the peptidase S14 family. In terms of assembly, fourteen ClpP subunits assemble into 2 heptameric rings which stack back to back to give a disk-like structure with a central cavity, resembling the structure of eukaryotic proteasomes.

Its subcellular location is the cytoplasm. It catalyses the reaction Hydrolysis of proteins to small peptides in the presence of ATP and magnesium. alpha-casein is the usual test substrate. In the absence of ATP, only oligopeptides shorter than five residues are hydrolyzed (such as succinyl-Leu-Tyr-|-NHMec, and Leu-Tyr-Leu-|-Tyr-Trp, in which cleavage of the -Tyr-|-Leu- and -Tyr-|-Trp bonds also occurs).. Functionally, cleaves peptides in various proteins in a process that requires ATP hydrolysis. Has a chymotrypsin-like activity. Plays a major role in the degradation of misfolded proteins. ClpXP1 is involved in the complete degradation of the Site-2 clipped anti-sigma-W factor RsiW. This results in the release of SigW and the transcription activation of the genes under the control of the sigma-W factor. The chain is ATP-dependent Clp protease proteolytic subunit 1 from Bacillus licheniformis (strain ATCC 14580 / DSM 13 / JCM 2505 / CCUG 7422 / NBRC 12200 / NCIMB 9375 / NCTC 10341 / NRRL NRS-1264 / Gibson 46).